The sequence spans 238 residues: Isoprene-epoxide--glutathione S-transferase (238 aa).

In terms of domain architecture, GST N-terminal spans 7-82 (YVPAWGIPDI…YLKNKFGDKL (76 aa)). Residues 118 to 238 (DAGWETYIPF…LERIRKQYDI (121 aa)) enclose the GST C-terminal domain.

This sequence belongs to the GST superfamily. As to quaternary structure, homodimer.

The enzyme catalyses 2-glutathionyl-2-methylbut-3-en-1-ol = (3R)-3,4-epoxy-3-methylbut-1-ene + glutathione. Its activity is regulated as follows. Activity is inhibited by 1,2-epoxyhexane. Functionally, involved in isoprene degradation. Catalyzes the glutathione-dependent ring opening of various epoxides. The highest conversion rate is observed with the physiological substrate, 3,4-epoxy-3-methyl-1-butene, which is the primary oxidation product of isoprene. It can also use other epoxides, including epoxyethane, epoxypropane, epithiopropane, epichlorohydrin, epifluorohydrin, epibromohydrin, 1,2-epoxybutane, 1,2-epoxyhexane, cis-2,3-epoxybutane, cis-1,2-dichloroepoxyethane and trans-1,2-dichloroepoxyethane. This chain is Isoprene-epoxide--glutathione S-transferase, found in Rhodococcus sp. (strain AD45).